We begin with the raw amino-acid sequence, 174 residues long: MLTLIQGKKIVNDLRSRLAFEYNGQLIKILSKNIIAVGSLRREEKMLNDVDLLIIVPEKKLLKHVLPNIRIKDFSFSVKVCGERKCVLFIEWKKNTYQLDLFTALAEEKPYAVLHFTGPVSYLIRIRAALKKKNYKLNQYGLFKNQTLVPLKITTEKELIKELGFTYRIPKKRL.

Residues 42 to 51 (REEKMLNDVD) form an involved in ssDNA binding region. Mg(2+) contacts are provided by D49 and D51. A disulfide bridge connects residues C81 and C86. Residue D100 coordinates Mg(2+).

It belongs to the DNA polymerase type-X family. The cofactor is Mg(2+).

It is found in the virion. The enzyme catalyses DNA(n) + a 2'-deoxyribonucleoside 5'-triphosphate = DNA(n+1) + diphosphate. Error-prone polymerase lacking a proofreading 3'-5' exonuclease which catalyzes the gap-filling reaction during the DNA repair process. Specifically binds intermediates in the single-nucleotide base-excision repair process. Also catalyzes DNA polymerization with low nucleotide-insertion fidelity. Probably acts as a strategic DNA mutase, which gives rise to a rapid emergence of variants. Generates mismatched G-G pairs, in that case, the polymerase first binds the deoxynucleotide followed by mismatch formation. Together with the viral DNA ligase, fills the single nucleotide gaps generated by the AP endonuclease. Binds DNA with high affinity via the helix alphaE. This chain is Repair DNA polymerase X, found in African swine fever virus (isolate Tick/South Africa/Pretoriuskop Pr4/1996) (ASFV).